A 601-amino-acid polypeptide reads, in one-letter code: Group B oligopeptidase PepB (601 aa).

Residue histidine 386 participates in Zn(2+) binding. The active site involves glutamate 387. Residues histidine 390 and histidine 393 each contribute to the Zn(2+) site.

Belongs to the peptidase M3B family. The cofactor is Zn(2+).

The protein localises to the cytoplasm. Has oligopeptidase activity and degrades a variety of small bioactive peptides, including bradykinin, neurotensin, and peptide fragments of substance P and adrenocorticotropin. Also hydrolyzes the synthetic collagen-like substrate N-(3-[2-furyl]acryloyl)-Leu-Gly-Pro-Ala (FALGPA). The sequence is that of Group B oligopeptidase PepB (pepB) from Streptococcus agalactiae serotype III (strain NEM316).